The chain runs to 4318 residues: Cytoplasmic dynein 2 heavy chain 1 (4318 aa).

The stem stretch occupies residues 1 to 1658 (MPAEDARKEY…IMRMVDAEFQ (1658 aa)). Position 147–154 (147–154 (LKSLVRKQ)) interacts with ATP. 2 coiled-coil regions span residues 1328–1354 (DKAT…QRKW) and 1402–1431 (LRTT…RSIL). 4 AAA regions span residues 1659–1883 (YTYE…VLRG), 1951–2171 (DAIR…RQGD), 2261–2515 (ASDF…WVLG), and 2623–2871 (TFAR…SSSV). 1697 to 1704 (GPAGTGKT) serves as a coordination point for ATP. A coiled-coil region spans residues 1959 to 1986 (EHNLVVMETQVKKALELYEQLRQRMGVV). ATP is bound by residues 1989–1996 (GPSGSGKS), 2301–2308 (GPDGCGKG), and 2661–2668 (GRSGVGRR). The interval 2888–3176 (DVYRRKKQGV…YELEKEQETI (289 aa)) is stalk. Coiled coils occupy residues 2908 to 2989 (VAKL…AEIE) and 3423 to 3480 (QHEK…KTKE). 2 AAA regions span residues 3251-3487 (LSTE…TITQ) and 3699-3914 (MTFF…IIDR).

The protein belongs to the dynein heavy chain family. As to quaternary structure, the cytoplasmic dynein complex 2 is probably composed by a heavy chain DYH1B homodimer and a number of light intermediate chains.

Its subcellular location is the cytoplasm. The protein resides in the cytoskeleton. The protein localises to the cilium axoneme. It localises to the cell membrane. Its function is as follows. May function as a motor for intraflagellar retrograde transport. Functions in cilia biogenesis. The polypeptide is Cytoplasmic dynein 2 heavy chain 1 (DYH1B) (Tripneustes gratilla (Hawaian sea urchin)).